Consider the following 291-residue polypeptide: ATP synthase gamma chain (291 aa).

Belongs to the ATPase gamma chain family. As to quaternary structure, F-type ATPases have 2 components, CF(1) - the catalytic core - and CF(0) - the membrane proton channel. CF(1) has five subunits: alpha(3), beta(3), gamma(1), delta(1), epsilon(1). CF(0) has three main subunits: a, b and c.

It is found in the cell membrane. Its function is as follows. Produces ATP from ADP in the presence of a proton gradient across the membrane. The gamma chain is believed to be important in regulating ATPase activity and the flow of protons through the CF(0) complex. The protein is ATP synthase gamma chain of Streptococcus uberis (strain ATCC BAA-854 / 0140J).